A 510-amino-acid polypeptide reads, in one-letter code: Polyamine aminopropyltransferase 2 (510 aa).

6 helical membrane passes run 6 to 26, 38 to 58, 74 to 94, 102 to 122, 140 to 160, and 165 to 185; these read ALLVLAVFVVASCGLAYELIA, ILQFSSIIGAYLFAMGIGSWV, LELLVGLFGGVSAAALFLLFA, LVLYALVTVIGVLVGMEIPLV, VLTFDYLGALAVSLLFPLVLA, and LVRTGFLFGLCNTAIAVWTLW. One can recognise a PABS domain in the interval 205–449; sequence AGMVGAALLA…GEWGFILAAP (245 aa). Residues 207 to 456 are spermidine synthase; sequence MVGAALLAGF…AAPGRADFRP (250 aa). Glutamine 244 is an S-methyl-5'-thioadenosine binding site. Residues histidine 274 and aspartate 298 each contribute to the spermidine site. S-methyl-5'-thioadenosine-binding positions include aspartate 318 and 352-353; that span reads DA. Residue aspartate 370 is the Proton acceptor of the active site.

This sequence belongs to the spermidine/spermine synthase family. In terms of assembly, homodimer or homotetramer.

It is found in the cell membrane. It catalyses the reaction S-adenosyl 3-(methylsulfanyl)propylamine + putrescine = S-methyl-5'-thioadenosine + spermidine + H(+). The protein operates within amine and polyamine biosynthesis; spermidine biosynthesis; spermidine from putrescine: step 1/1. In terms of biological role, catalyzes the irreversible transfer of a propylamine group from the amino donor S-adenosylmethioninamine (decarboxy-AdoMet) to putrescine (1,4-diaminobutane) to yield spermidine. The protein is Polyamine aminopropyltransferase 2 of Ralstonia nicotianae (strain ATCC BAA-1114 / GMI1000) (Ralstonia solanacearum).